Here is a 174-residue protein sequence, read N- to C-terminus: uncharacterized protein (174 aa).

The interval 1–55 (MGCVVSKSDDIKNENESRQRNQASSSQQPSSSQTPSKQIGIAAKDSEEQPQEVSY) is disordered. The N-myristoyl glycine moiety is linked to residue glycine 2. Positions 7-19 (KSDDIKNENESRQ) are enriched in basic and acidic residues. The segment covering 20–38 (RNQASSSQQPSSSQTPSKQ) has biased composition (low complexity).

This is an uncharacterized protein from Dictyostelium discoideum (Social amoeba).